Reading from the N-terminus, the 328-residue chain is Malate dehydrogenase (328 aa).

12-18 provides a ligand contact to NAD(+); it reads GAAGQIG. Substrate is bound by residues Arg-95 and Arg-101. NAD(+) contacts are provided by residues Asn-108, Gln-115, and 132-134; that span reads VGN. Substrate is bound by residues Asn-134 and Arg-165. The active-site Proton acceptor is His-190.

Belongs to the LDH/MDH superfamily. MDH type 2 family.

It carries out the reaction (S)-malate + NAD(+) = oxaloacetate + NADH + H(+). Its function is as follows. Catalyzes the reversible oxidation of malate to oxaloacetate. The chain is Malate dehydrogenase from Polaromonas sp. (strain JS666 / ATCC BAA-500).